A 152-amino-acid polypeptide reads, in one-letter code: MTQKITVSIRHLPHGEGLPLPEYQTAHAAGLDLIAAVPQDAPLTLQPGRYVLVPTGLTIALPENYEAQVRPRSGLAAKHGVTVLNAPGTIDADYRGEIGVLLINHGTEPFAIRRGERIAQMVIAPVSRAQFVAVEALPESGRGAGGFGSTGR.

Substrate is bound by residues 72 to 74 (RSG), Asn-85, and 89 to 91 (TID).

Belongs to the dUTPase family. It depends on Mg(2+) as a cofactor.

The catalysed reaction is dUTP + H2O = dUMP + diphosphate + H(+). It functions in the pathway pyrimidine metabolism; dUMP biosynthesis; dUMP from dCTP (dUTP route): step 2/2. Functionally, this enzyme is involved in nucleotide metabolism: it produces dUMP, the immediate precursor of thymidine nucleotides and it decreases the intracellular concentration of dUTP so that uracil cannot be incorporated into DNA. The sequence is that of Deoxyuridine 5'-triphosphate nucleotidohydrolase from Rhodopseudomonas palustris (strain ATCC BAA-98 / CGA009).